A 318-amino-acid chain; its full sequence is Formimidoylglutamase (318 aa).

Mn(2+)-binding residues include His130, Asp155, His157, Asp159, Asp246, and Asp248.

This sequence belongs to the arginase family. Requires Mn(2+) as cofactor.

It catalyses the reaction N-formimidoyl-L-glutamate + H2O = formamide + L-glutamate. The protein operates within amino-acid degradation; L-histidine degradation into L-glutamate; L-glutamate from N-formimidoyl-L-glutamate (hydrolase route): step 1/1. Its function is as follows. Catalyzes the conversion of N-formimidoyl-L-glutamate to L-glutamate and formamide. This chain is Formimidoylglutamase, found in Klebsiella pneumoniae subsp. pneumoniae (strain ATCC 700721 / MGH 78578).